Reading from the N-terminus, the 194-residue chain is RxLR effector protein Avh240 (194 aa).

An N-terminal signal peptide occupies residues 1–23 (MRPYFTLLLALAFILACTNLVEA). Residues 38 to 57 (RHLRTAVASVVDLPDDEDER) carry the RxLR-dEER motif. A host plasma membrane-binding region spans residues 58–108 (LLGYNTVQLWRMRRTANKLMNGKLTTQKEAALKKWMASQQDKFLAKWLKSS).

This sequence belongs to the RxLR effector family. Homodimer. Interacts with host soybean aspartic protease AP1.

Its subcellular location is the secreted. The protein resides in the host cell membrane. Effector that suppresses plant defense responses during the early stages of pathogen infection. Suppresses cell death induced by effectors and PAMPs in plant hosts. Avh240 dimerizes and localizes at the plasma membrane to interfere with aspartic protease AP1 secretion, which presents an effective mechanism by which effector proteins suppress plant apoplastic immunity. The chain is RxLR effector protein Avh240 from Phytophthora sojae (Soybean stem and root rot agent).